Reading from the N-terminus, the 449-residue chain is Glucose-6-phosphate isomerase (449 aa).

E291 (proton donor) is an active-site residue. Active-site residues include H312 and K426.

Belongs to the GPI family.

The protein localises to the cytoplasm. It carries out the reaction alpha-D-glucose 6-phosphate = beta-D-fructose 6-phosphate. It functions in the pathway carbohydrate biosynthesis; gluconeogenesis. The protein operates within carbohydrate degradation; glycolysis; D-glyceraldehyde 3-phosphate and glycerone phosphate from D-glucose: step 2/4. In terms of biological role, catalyzes the reversible isomerization of glucose-6-phosphate to fructose-6-phosphate. The sequence is that of Glucose-6-phosphate isomerase from Streptococcus pneumoniae serotype 4 (strain ATCC BAA-334 / TIGR4).